The primary structure comprises 83 residues: Beta-defensin 119 (83 aa).

A signal peptide spans 1–20 (MKFLFLFLAILLAMEPVVSG). Cystine bridges form between Cys-27-Cys-54, Cys-34-Cys-48, and Cys-38-Cys-55.

Belongs to the beta-defensin family.

It localises to the secreted. Has antibacterial activity. The protein is Beta-defensin 119 (DEFB119) of Bos taurus (Bovine).